We begin with the raw amino-acid sequence, 787 residues long: Ribonucleoside-diphosphate reductase large subunit (787 aa).

Substrate-binding positions include threonine 209, 224–225, glycine 255, 436–440, and 618–622; these read SC, NLCTE, and PTVSS. A disulfide bond links cysteine 225 and cysteine 453. Asparagine 436 serves as the catalytic Proton acceptor. The Cysteine radical intermediate role is filled by cysteine 438. Residue glutamate 440 is the Proton acceptor of the active site.

Belongs to the ribonucleoside diphosphate reductase large chain family. In terms of assembly, heterotetramer composed of a homodimer of the large subunit (R1) and a homodimer of the small subunit (R2). Larger multisubunit protein complex are also active, composed of (R1)n(R2)n.

The catalysed reaction is a 2'-deoxyribonucleoside 5'-diphosphate + [thioredoxin]-disulfide + H2O = a ribonucleoside 5'-diphosphate + [thioredoxin]-dithiol. In terms of biological role, ribonucleoside-diphosphate reductase holoenzyme provides the precursors necessary for viral DNA synthesis. Allows virus growth in non-dividing cells, as well as reactivation from latency in infected hosts. Catalyzes the biosynthesis of deoxyribonucleotides from the corresponding ribonucleotides. This chain is Ribonucleoside-diphosphate reductase large subunit, found in Bos taurus (Bovine).